The sequence spans 186 residues: Large ribosomal subunit protein uL5 (186 aa).

Belongs to the universal ribosomal protein uL5 family. Part of the 50S ribosomal subunit; contacts the 5S rRNA and probably tRNA. Forms a bridge to the 30S subunit in the 70S ribosome.

Its function is as follows. This is one of the proteins that bind and probably mediate the attachment of the 5S RNA into the large ribosomal subunit, where it forms part of the central protuberance. In the 70S ribosome it contacts protein S13 of the 30S subunit (bridge B1b), connecting the 2 subunits; this bridge is implicated in subunit movement. May contact the P site tRNA; the 5S rRNA and some of its associated proteins might help stabilize positioning of ribosome-bound tRNAs. This chain is Large ribosomal subunit protein uL5, found in Methanopyrus kandleri (strain AV19 / DSM 6324 / JCM 9639 / NBRC 100938).